The chain runs to 273 residues: Large ribosomal subunit protein uL2 (273 aa).

The disordered stretch occupies residues 196 to 273 (GNSDHGLESS…SSKYIIERRK (78 aa)). Composition is skewed to basic residues over residues 209-220 (GRTRWMGRRPRN) and 255-264 (LKTRAPKKQS).

This sequence belongs to the universal ribosomal protein uL2 family. In terms of assembly, part of the 50S ribosomal subunit. Forms a bridge to the 30S subunit in the 70S ribosome.

In terms of biological role, one of the primary rRNA binding proteins. Required for association of the 30S and 50S subunits to form the 70S ribosome, for tRNA binding and peptide bond formation. It has been suggested to have peptidyltransferase activity; this is somewhat controversial. Makes several contacts with the 16S rRNA in the 70S ribosome. The sequence is that of Large ribosomal subunit protein uL2 from Phocaeicola vulgatus (strain ATCC 8482 / DSM 1447 / JCM 5826 / CCUG 4940 / NBRC 14291 / NCTC 11154) (Bacteroides vulgatus).